We begin with the raw amino-acid sequence, 389 residues long: Putative cyclin-F3-1 (389 aa).

The interval 1–103 (MEAAAAAAAE…GAAGGSRQPV (103 aa)) is disordered. Low complexity predominate over residues 19–43 (VEGAAVAAVAPEAAAEGPSEPNAGE).

Belongs to the cyclin family. Cyclin F subfamily.

The sequence is that of Putative cyclin-F3-1 (CYCF3-1) from Oryza sativa subsp. japonica (Rice).